The chain runs to 272 residues: Indole-3-glycerol phosphate synthase (272 aa).

It belongs to the TrpC family.

It catalyses the reaction 1-(2-carboxyphenylamino)-1-deoxy-D-ribulose 5-phosphate + H(+) = (1S,2R)-1-C-(indol-3-yl)glycerol 3-phosphate + CO2 + H2O. The protein operates within amino-acid biosynthesis; L-tryptophan biosynthesis; L-tryptophan from chorismate: step 4/5. The protein is Indole-3-glycerol phosphate synthase of Mycobacterium tuberculosis (strain ATCC 25177 / H37Ra).